We begin with the raw amino-acid sequence, 102 residues long: NADH-quinone oxidoreductase subunit K (102 aa).

A run of 3 helical transmembrane segments spans residues 5–25 (LEHYLTVAAILFTLGIFGIFL), 31–51 (IVILMSIELMLLAVNINLVAF), and 66–86 (FVLTVAAAEAAIGLAILVVFF).

This sequence belongs to the complex I subunit 4L family. In terms of assembly, NDH-1 is composed of 14 different subunits. Subunits NuoA, H, J, K, L, M, N constitute the membrane sector of the complex.

Its subcellular location is the cell inner membrane. It carries out the reaction a quinone + NADH + 5 H(+)(in) = a quinol + NAD(+) + 4 H(+)(out). Functionally, NDH-1 shuttles electrons from NADH, via FMN and iron-sulfur (Fe-S) centers, to quinones in the respiratory chain. The immediate electron acceptor for the enzyme in this species is believed to be ubiquinone. Couples the redox reaction to proton translocation (for every two electrons transferred, four hydrogen ions are translocated across the cytoplasmic membrane), and thus conserves the redox energy in a proton gradient. In Parvibaculum lavamentivorans (strain DS-1 / DSM 13023 / NCIMB 13966), this protein is NADH-quinone oxidoreductase subunit K.